A 185-amino-acid polypeptide reads, in one-letter code: ATP-dependent protease subunit HslV (185 aa).

Thr13 is an active-site residue. Na(+)-binding residues include Gly167, Cys170, and Thr173.

This sequence belongs to the peptidase T1B family. HslV subfamily. As to quaternary structure, a double ring-shaped homohexamer of HslV is capped on each side by a ring-shaped HslU homohexamer. The assembly of the HslU/HslV complex is dependent on binding of ATP.

The protein localises to the cytoplasm. The enzyme catalyses ATP-dependent cleavage of peptide bonds with broad specificity.. Allosterically activated by HslU binding. Functionally, protease subunit of a proteasome-like degradation complex believed to be a general protein degrading machinery. The chain is ATP-dependent protease subunit HslV from Sinorhizobium medicae (strain WSM419) (Ensifer medicae).